Here is a 391-residue protein sequence, read N- to C-terminus: ATP phosphoribosyltransferase regulatory subunit (391 aa).

Belongs to the class-II aminoacyl-tRNA synthetase family. HisZ subfamily. In terms of assembly, heteromultimer composed of HisG and HisZ subunits.

The protein localises to the cytoplasm. Its pathway is amino-acid biosynthesis; L-histidine biosynthesis; L-histidine from 5-phospho-alpha-D-ribose 1-diphosphate: step 1/9. Required for the first step of histidine biosynthesis. May allow the feedback regulation of ATP phosphoribosyltransferase activity by histidine. In Nitrosomonas europaea (strain ATCC 19718 / CIP 103999 / KCTC 2705 / NBRC 14298), this protein is ATP phosphoribosyltransferase regulatory subunit.